Here is a 703-residue protein sequence, read N- to C-terminus: Elongation factor G (703 aa).

Positions 8-290 (ARYRNIGICA…AVIEYLPAPT (283 aa)) constitute a tr-type G domain. GTP is bound by residues 17 to 24 (AHVDAGKT), 88 to 92 (DTPGH), and 142 to 145 (NKMD).

Belongs to the TRAFAC class translation factor GTPase superfamily. Classic translation factor GTPase family. EF-G/EF-2 subfamily.

Its subcellular location is the cytoplasm. Functionally, catalyzes the GTP-dependent ribosomal translocation step during translation elongation. During this step, the ribosome changes from the pre-translocational (PRE) to the post-translocational (POST) state as the newly formed A-site-bound peptidyl-tRNA and P-site-bound deacylated tRNA move to the P and E sites, respectively. Catalyzes the coordinated movement of the two tRNA molecules, the mRNA and conformational changes in the ribosome. This Teredinibacter turnerae (strain ATCC 39867 / T7901) protein is Elongation factor G.